The sequence spans 124 residues: uncharacterized protein (124 aa).

Positions Met1–Ser19 are cleaved as a signal peptide. The next 2 membrane-spanning stretches (helical) occupy residues Ile37–Phe57 and Leu86–Ile108.

It is found in the membrane. This is an uncharacterized protein from Saccharomyces cerevisiae (strain ATCC 204508 / S288c) (Baker's yeast).